Reading from the N-terminus, the 153-residue chain is Transcriptional repressor NrdR (153 aa).

Residues 3–34 (CPFCNNISTNVKDSRSIEDDMLIRRRRVCPVC) fold into a zinc finger. In terms of domain architecture, ATP-cone spans 49-139 (LMVIKKNGGL…VYMNFKNIND (91 aa)).

It belongs to the NrdR family. Zn(2+) is required as a cofactor.

In terms of biological role, negatively regulates transcription of bacterial ribonucleotide reductase nrd genes and operons by binding to NrdR-boxes. This chain is Transcriptional repressor NrdR, found in Ehrlichia ruminantium (strain Gardel).